Consider the following 147-residue polypeptide: Hemoglobin subunit delta (147 aa).

The Globin domain maps to 3-147; it reads NLTAAEKTQV…VANALAHKYH (145 aa). Heme b contacts are provided by histidine 64 and histidine 93.

The protein belongs to the globin family. Heterotetramer of two delta chains and two alpha chains. In terms of tissue distribution, red blood cells.

The protein is Hemoglobin subunit delta (HBD) of Loxodonta africana (African elephant).